Here is a 277-residue protein sequence, read N- to C-terminus: Diaminopimelate epimerase (277 aa).

Positions 13, 46, and 66 each coordinate substrate. Cys75 serves as the catalytic Proton donor. Residues 76-77, Asn160, Asn193, and 211-212 contribute to the substrate site; these read GN and ER. The active-site Proton acceptor is the Cys220. Position 221 to 222 (221 to 222) interacts with substrate; sequence GT.

The protein belongs to the diaminopimelate epimerase family. As to quaternary structure, homodimer.

It is found in the cytoplasm. The enzyme catalyses (2S,6S)-2,6-diaminopimelate = meso-2,6-diaminopimelate. The protein operates within amino-acid biosynthesis; L-lysine biosynthesis via DAP pathway; DL-2,6-diaminopimelate from LL-2,6-diaminopimelate: step 1/1. Catalyzes the stereoinversion of LL-2,6-diaminopimelate (L,L-DAP) to meso-diaminopimelate (meso-DAP), a precursor of L-lysine and an essential component of the bacterial peptidoglycan. The polypeptide is Diaminopimelate epimerase (Saccharophagus degradans (strain 2-40 / ATCC 43961 / DSM 17024)).